Here is a 320-residue protein sequence, read N- to C-terminus: Elongation factor Ts (320 aa).

The interval 82–85 is involved in Mg(2+) ion dislocation from EF-Tu; the sequence is TDFV.

The protein belongs to the EF-Ts family.

The protein localises to the cytoplasm. Its function is as follows. Associates with the EF-Tu.GDP complex and induces the exchange of GDP to GTP. It remains bound to the aminoacyl-tRNA.EF-Tu.GTP complex up to the GTP hydrolysis stage on the ribosome. This is Elongation factor Ts from Flavobacterium johnsoniae (strain ATCC 17061 / DSM 2064 / JCM 8514 / BCRC 14874 / CCUG 350202 / NBRC 14942 / NCIMB 11054 / UW101) (Cytophaga johnsonae).